The chain runs to 586 residues: Pectinesterase 1 (586 aa).

The first 49 residues, 1 to 49 (MDSVNSFKGYGKVDEAQDLALKKKTRKRLLLLSISVVVLIAVIIAAVVA), serve as a signal peptide directing secretion. Residues Asn-57, Asn-97, Asn-154, Asn-201, and Asn-207 are each glycosylated (N-linked (GlcNAc...) asparagine). Positions 250–253 (RRLM) match the RRLM cleavage motif motif. Residues 269-272 (RRLL) carry the RRLL cleavage motif motif. Residues Thr-355 and Gln-385 each contribute to the substrate site. Asp-408 serves as the catalytic Proton donor. Residues Cys-422 and Cys-442 are joined by a disulfide bond. Asp-429 functions as the Nucleophile in the catalytic mechanism. An N-linked (GlcNAc...) asparagine glycan is attached at Asn-466. 2 residues coordinate substrate: Arg-492 and Trp-494.

It in the N-terminal section; belongs to the PMEI family. This sequence in the C-terminal section; belongs to the pectinesterase family. As to quaternary structure, interacts with SBT6.1. In terms of tissue distribution, expressed in siliques.

It localises to the secreted. The protein localises to the cell wall. It is found in the golgi apparatus membrane. It catalyses the reaction [(1-&gt;4)-alpha-D-galacturonosyl methyl ester](n) + n H2O = [(1-&gt;4)-alpha-D-galacturonosyl](n) + n methanol + n H(+). Its pathway is glycan metabolism; pectin degradation; 2-dehydro-3-deoxy-D-gluconate from pectin: step 1/5. Its function is as follows. Acts in the modification of cell walls via demethylesterification of cell wall pectin. Demethylates protein phosphatase 2A (PP2A) that have been reversibly carboxymethylated by LCMT1. Acts as a negative regulators of genes involved in salt stress response. In Arabidopsis thaliana (Mouse-ear cress), this protein is Pectinesterase 1 (PME1).